We begin with the raw amino-acid sequence, 605 residues long: Formin-binding protein 1-like (605 aa).

The region spanning 1 to 263 is the F-BAR domain; the sequence is MSWGTELWDQ…AAKSVDERRD (263 aa). The stretch at 66–258 forms a coiled coil; sequence FTSCIAFFNI…EGMILAAKSV (193 aa). The tract at residues 245-535 is interaction with CDC42; sequence SKCLEGMILA…EFDDEFEDDD (291 aa). At serine 295 the chain carries Phosphoserine. The stretch at 392-484 forms a coiled coil; sequence LEDFSHLPPE…VEGKTGIRGD (93 aa). One can recognise an REM-1 domain in the interval 397-474; sequence HLPPEQRRKK…IHKNEAWLSE (78 aa). A disordered region spans residues 482-538; the sequence is RGDRRHSSDINHLVTQGRESPEGSYTDDANQEVRGPPQQHGHHSEFDDEFEDDDPLP. Serine 488, serine 501, and serine 505 each carry phosphoserine. The tract at residues 522–605 is interaction with DNM1; that stretch reads GHHSEFDDEF…VTLEKSSKGS (84 aa). Positions 527-536 are enriched in acidic residues; the sequence is FDDEFEDDDP. In terms of domain architecture, SH3 spans 538-599; that stretch reads PAIGHCKAIY…PTTYIDVTLE (62 aa). Residues 541-597 are interaction with DNM2 and WASL; that stretch reads GHCKAIYPFDGHNEGTLAMKEGEVLYIIEEDKGDGWTRARRQNGEEGYVPTTYIDVT. Residues 541–605 are interaction with DAAM1, DIAPH1 and DIAPH2; that stretch reads GHCKAIYPFD…VTLEKSSKGS (65 aa).

It belongs to the FNBP1 family. Homodimerizes, the dimers can polymerize end-to-end to form filamentous structures. Interacts with GTP-bound CDC42. Interacts with DAAM1, DIAPH1, DIAPH2, DNM1, DNM2 and WASL/N-WASP. Interacts with ATG3. Interacts (via SH3 domain) with ABI1, WASF2, CDC42 and WIPF1.

Its subcellular location is the cytoplasm. It localises to the cytoskeleton. The protein localises to the cell cortex. The protein resides in the cytoplasmic vesicle. It is found in the cell membrane. Its function is as follows. Required to coordinate membrane tubulation with reorganization of the actin cytoskeleton during endocytosis. May bind to lipids such as phosphatidylinositol 4,5-bisphosphate and phosphatidylserine and promote membrane invagination and the formation of tubules. Also promotes CDC42-induced actin polymerization by activating the WASL-WASPIP complex, the predominant form of WASL/N-WASP in cells. Actin polymerization may promote the fission of membrane tubules to form endocytic vesicles. Essential for autophagy of intracellular bacterial pathogens. The protein is Formin-binding protein 1-like (Fnbp1l) of Mus musculus (Mouse).